A 476-amino-acid chain; its full sequence is Aspartyl/glutamyl-tRNA(Asn/Gln) amidotransferase subunit B (476 aa).

It belongs to the GatB/GatE family. GatB subfamily. As to quaternary structure, heterotrimer of A, B and C subunits.

It carries out the reaction L-glutamyl-tRNA(Gln) + L-glutamine + ATP + H2O = L-glutaminyl-tRNA(Gln) + L-glutamate + ADP + phosphate + H(+). The enzyme catalyses L-aspartyl-tRNA(Asn) + L-glutamine + ATP + H2O = L-asparaginyl-tRNA(Asn) + L-glutamate + ADP + phosphate + 2 H(+). Allows the formation of correctly charged Asn-tRNA(Asn) or Gln-tRNA(Gln) through the transamidation of misacylated Asp-tRNA(Asn) or Glu-tRNA(Gln) in organisms which lack either or both of asparaginyl-tRNA or glutaminyl-tRNA synthetases. The reaction takes place in the presence of glutamine and ATP through an activated phospho-Asp-tRNA(Asn) or phospho-Glu-tRNA(Gln). This Thermosipho melanesiensis (strain DSM 12029 / CIP 104789 / BI429) protein is Aspartyl/glutamyl-tRNA(Asn/Gln) amidotransferase subunit B.